The sequence spans 121 residues: MSLTKEQILEAVAKMSILDITELISMMEQKFGVSSINTIVPTSSPAETVEEKTEFDVVLTNIGANKIAVIKAVRGVISLGLKEAKDLVESAPITLKESISKDEAAALKKILEDAGASVEIK.

This sequence belongs to the bacterial ribosomal protein bL12 family. In terms of assembly, homodimer. Part of the ribosomal stalk of the 50S ribosomal subunit. Forms a multimeric L10(L12)X complex, where L10 forms an elongated spine to which 2 to 4 L12 dimers bind in a sequential fashion. Binds GTP-bound translation factors.

Functionally, forms part of the ribosomal stalk which helps the ribosome interact with GTP-bound translation factors. Is thus essential for accurate translation. This Baumannia cicadellinicola subsp. Homalodisca coagulata protein is Large ribosomal subunit protein bL12.